The following is a 419-amino-acid chain: ADIPOR-like receptor IZH3 (419 aa).

A disordered region spans residues 1 to 65 (MSHPNTHMPR…GEAGGGRSVL (65 aa)). The Lumenal portion of the chain corresponds to 1–147 (MSHPNTHMPR…LNAYGWHNET (147 aa)). Residue asparagine 145 is glycosylated (N-linked (GlcNAc...) asparagine). The helical transmembrane segment at 148–168 (INIWSHLVGAAVLAYLLCWGW) threads the bilayer. Over 169–184 (PRSDVYRAAQVPRLAK) the chain is Cytoplasmic. Residues 185–205 (WAIGAFLACGVKCMASSVAWH) form a helical membrane-spanning segment. Residues 206–225 (TFNGTCHLKLRSRFVCVDYT) lie on the Lumenal side of the membrane. A glycan (N-linked (GlcNAc...) asparagine) is linked at asparagine 208. A helical transmembrane segment spans residues 226-246 (GITLLVTASVVTTVAVTLYGL). The Cytoplasmic portion of the chain corresponds to 247–249 (SRP). A helical membrane pass occupies residues 250 to 270 (LMYAYMVASIGLGTAAGVMNW). Residues 271–283 (SPHFDRPEARPLR) are Lumenal-facing. The helical transmembrane segment at 284–304 (IAVYVGLAALGLVSFVHVWMQ) threads the bilayer. Over 305-311 (VRWASAH) the chain is Cytoplasmic. Residues 312–332 (LMAPLVYKSLVWYGIGVVFYA) form a helical membrane-spanning segment. Residues 333-377 (TLVPERWRSDVTLDCCSGPVHEAACRQFRDLPPVARKDRQFWSLW) lie on the Lumenal side of the membrane. Residues 378-398 (WVDYFCHSHFLWHVFVVLGVV) form a helical membrane-spanning segment. The Cytoplasmic segment spans residues 399–419 (GHYRAVLQMSRIVWLDAGRAF).

This sequence belongs to the ADIPOR family.

The protein resides in the endoplasmic reticulum membrane. Its function is as follows. ADIPOR-like receptor involved in zinc metabolism either by altering membrane sterol content or by directly altering cellular zinc levels. The sequence is that of ADIPOR-like receptor IZH3 (IZH3) from Eremothecium gossypii (strain ATCC 10895 / CBS 109.51 / FGSC 9923 / NRRL Y-1056) (Yeast).